The following is a 120-amino-acid chain: Protein VraC (120 aa).

This chain is Protein VraC, found in Staphylococcus epidermidis (strain ATCC 35984 / DSM 28319 / BCRC 17069 / CCUG 31568 / BM 3577 / RP62A).